The following is a 716-amino-acid chain: Epidermal growth factor receptor kinase substrate 8-like protein 1 (716 aa).

Residues 35-164 (QYHVNHLVTF…LQNYRSGRGE (130 aa)) enclose the PTB domain. Disordered stretches follow at residues 175-194 (EELR…QRRP), 203-249 (VEPS…GPEL), 404-472 (PGVE…ETES), 528-582 (YNIL…SLDP), and 600-628 (SRLA…PRSE). Phosphoserine is present on S182. A Phosphothreonine modification is found at T187. Basic and acidic residues predominate over residues 435 to 446 (PWEDPVEKQLQH). Positions 453–464 (QSAPQVAVNGQQ) are enriched in polar residues. An SH3 domain is found at 477–536 (KARKWVLCNYDFQARNGSELSVKHRDVLEVLDDRRKWWKVRDHQGQEGYVPYNILTPHPG). Residues 553-563 (TPPPPPAPAPA) are compositionally biased toward pro residues. A coiled-coil region spans residues 682–713 (VQRALLEDREKVSELEAVMEKQKKKVEGETKT).

This sequence belongs to the EPS8 family. Interacts with ABI1. Part of a complex that contains SOS1, ABI1 and EPS8L2. Associates with F-actin. In terms of tissue distribution, detected in placenta, skin, mammary gland, bone marrow and stomach.

The protein localises to the cytoplasm. Stimulates guanine exchange activity of SOS1. May play a role in membrane ruffling and remodeling of the actin cytoskeleton. The polypeptide is Epidermal growth factor receptor kinase substrate 8-like protein 1 (Eps8l1) (Mus musculus (Mouse)).